The chain runs to 270 residues: Tubulin-specific chaperone B (270 aa).

In terms of domain architecture, CAP-Gly spans 214 to 256 (GTVEFSSGVWIGVELDLPLGKNDGSVKGKQYFQCSPKYGCFAK).

The protein belongs to the TBCB family. In terms of assembly, supercomplex made of cofactors A to E. Cofactors A and D function by capturing and stabilizing tubulin in a quasi-native conformation. Cofactor E binds to the cofactor D-tubulin complex; interaction with cofactor C then causes the release of tubulin polypeptides that are committed to the native state.

The protein resides in the cytoplasm. The protein localises to the cytoskeleton. In terms of biological role, binds to alpha-tubulin folding intermediates after their interaction with cytosolic chaperonin in the pathway leading from newly synthesized tubulin to properly folded heterodimer. The chain is Tubulin-specific chaperone B (tbcb) from Dictyostelium discoideum (Social amoeba).